The sequence spans 502 residues: Phenylalanine--tRNA ligase alpha subunit (502 aa).

L-phenylalanine contacts are provided by residues threonine 339, 382–384 (QIE), and tyrosine 422. Glutamate 424 contacts Mg(2+). Phenylalanine 448 is a binding site for L-phenylalanine.

This sequence belongs to the class-II aminoacyl-tRNA synthetase family. Phe-tRNA synthetase alpha subunit type 2 subfamily. In terms of assembly, tetramer of two alpha and two beta subunits. Requires Mg(2+) as cofactor.

It is found in the cytoplasm. It carries out the reaction tRNA(Phe) + L-phenylalanine + ATP = L-phenylalanyl-tRNA(Phe) + AMP + diphosphate + H(+). This Halobacterium salinarum (strain ATCC 29341 / DSM 671 / R1) protein is Phenylalanine--tRNA ligase alpha subunit.